Consider the following 637-residue polypeptide: DNA mismatch repair protein MutL (637 aa).

A compositionally biased stretch (polar residues) spans Q343 to P352. Positions Q343–P411 are disordered. Basic and acidic residues predominate over residues S365–H380. Low complexity predominate over residues Y388–S397.

The protein belongs to the DNA mismatch repair MutL/HexB family.

Its function is as follows. This protein is involved in the repair of mismatches in DNA. It is required for dam-dependent methyl-directed DNA mismatch repair. May act as a 'molecular matchmaker', a protein that promotes the formation of a stable complex between two or more DNA-binding proteins in an ATP-dependent manner without itself being part of a final effector complex. This Shewanella halifaxensis (strain HAW-EB4) protein is DNA mismatch repair protein MutL.